An 827-amino-acid chain; its full sequence is MELNRRDFMKANAAMAAAAAAGMTIPVKNVYAADDGIRWDKAPCRFCGTGCSVLVGTKDGRVVATQGDPDAEVNRGLNCIKGYFLSKIMYGADRVQTPLLRMKDGKFHKEGDFTPVSWDQAFTIMAEKVKDILKKKEPNSVGMFSSGQTTIFEGYAKVKLWKGGLRSNTIDPNARHCMASAAVAFMRTFGMDEPMGCYNDIEKTDAFVLWGSNMAEMHPILWSRISDRRLSDDKVKVVVMSTFEHRSFELADTPIIFKPHSDLAILNYIANYIIQNDKVNWDFVNKHTKFKRGETDIGYGLRPDHPRQKAAKNAKTAGKMYDSDFEEFKKIVEPYTLEKAHEISGVPKDQLETLAKMYADPKQTLVSFWTMGFNQHVRGVWVNHMVYNVHLLTGKISTPGCGPFSLTGQPSACGTAREVGTFVHRLPADMVVTNPKHVEIVEKAWKLPKGTIPTVPGYPAVMQSRMLKDGKLNFLWQLCTNNMQGGPNINEEIFPGWRNPENFIVVSDPYPSVSAVAADLILPTCMWVEKEGAYGNAERRTQFWRQQVKGPGESKSDLWQIVEFSKYFKTDEVWDEALLAQMPEYRGKTLYEVLYKNGQVDKFDTPTNIPGYINDEAEHFGYYLQKGLFEEYAAFGRGHGHDLADFDTYHQVRGLRWPVVDGKETLWRYREGFDPYVKAGEGVSFYGYPDKKAIILGVPYEEPAESPDEEYDLWLCTGRVLEHWHTGTMTRRVPELHRSFPNNLCWMHPDDAKARGLRHGDKVKLITRRGEIITHLDTRGRNKCPKGLIYTTFFDAGQLANKLTLDATDPISGETDYKKCAVKVVKA.

The tat-type signal signal peptide spans 1–32 (MELNRRDFMKANAAMAAAAAAGMTIPVKNVYA). The region spanning 37 to 93 (IRWDKAPCRFCGTGCSVLVGTKDGRVVATQGDPDAEVNRGLNCIKGYFLSKIMYGAD) is the 4Fe-4S Mo/W bis-MGD-type domain. The [4Fe-4S] cluster site is built by C44, C47, C51, and C79. Mo-bis(molybdopterin guanine dinucleotide)-binding positions include K81, Q148, N173, C177, 210-217 (WGSNMAEM), 241-245 (STFEH), M371, Q375, N481, 507-508 (SD), K530, D557, and 717-726 (TGRVLEHWHT). F793 contacts substrate. Positions 801 and 818 each coordinate Mo-bis(molybdopterin guanine dinucleotide).

It belongs to the prokaryotic molybdopterin-containing oxidoreductase family. NasA/NapA/NarB subfamily. As to quaternary structure, component of the periplasmic nitrate reductase NapAB complex composed of NapA and NapB. [4Fe-4S] cluster is required as a cofactor. The cofactor is Mo-bis(molybdopterin guanine dinucleotide). In terms of processing, predicted to be exported by the Tat system. The position of the signal peptide cleavage has not been experimentally proven.

The protein localises to the periplasm. The catalysed reaction is 2 Fe(II)-[cytochrome] + nitrate + 2 H(+) = 2 Fe(III)-[cytochrome] + nitrite + H2O. Functionally, catalytic subunit of the periplasmic nitrate reductase complex NapAB. Receives electrons from NapB and catalyzes the reduction of nitrate to nitrite. The sequence is that of Periplasmic nitrate reductase from Actinobacillus pleuropneumoniae serotype 7 (strain AP76).